Consider the following 388-residue polypeptide: LL-diaminopimelate aminotransferase (388 aa).

Substrate is bound by residues tyrosine 16 and glycine 41. Residues tyrosine 70, 104 to 105 (SK), tyrosine 129, asparagine 179, tyrosine 210, and 239 to 241 (SLS) each bind pyridoxal 5'-phosphate. Residues lysine 105, tyrosine 129, and asparagine 179 each contribute to the substrate site. Lysine 242 is modified (N6-(pyridoxal phosphate)lysine). Arginine 250 provides a ligand contact to pyridoxal 5'-phosphate. Substrate is bound at residue arginine 368.

The protein belongs to the class-I pyridoxal-phosphate-dependent aminotransferase family. LL-diaminopimelate aminotransferase subfamily. In terms of assembly, homodimer. Requires pyridoxal 5'-phosphate as cofactor.

The catalysed reaction is (2S,6S)-2,6-diaminopimelate + 2-oxoglutarate = (S)-2,3,4,5-tetrahydrodipicolinate + L-glutamate + H2O + H(+). Its pathway is amino-acid biosynthesis; L-lysine biosynthesis via DAP pathway; LL-2,6-diaminopimelate from (S)-tetrahydrodipicolinate (aminotransferase route): step 1/1. Its function is as follows. Involved in the synthesis of meso-diaminopimelate (m-DAP or DL-DAP), required for both lysine and peptidoglycan biosynthesis. Catalyzes the direct conversion of tetrahydrodipicolinate to LL-diaminopimelate. This is LL-diaminopimelate aminotransferase from Oleidesulfovibrio alaskensis (strain ATCC BAA-1058 / DSM 17464 / G20) (Desulfovibrio alaskensis).